A 380-amino-acid chain; its full sequence is Queuine tRNA-ribosyltransferase (380 aa).

Asp96 serves as the catalytic Proton acceptor. Substrate is bound by residues 96 to 100 (DSGGF), Asp150, Gln193, and Gly220. Residues 251–257 (GVGAPDS) form an RNA binding region. Catalysis depends on Asp270, which acts as the Nucleophile. The RNA binding; important for wobble base 34 recognition stretch occupies residues 275 to 279 (TRIAR). Residues Cys308, Cys310, Cys313, and His339 each coordinate Zn(2+).

Belongs to the queuine tRNA-ribosyltransferase family. Homodimer. Within each dimer, one monomer is responsible for RNA recognition and catalysis, while the other monomer binds to the replacement base PreQ1. It depends on Zn(2+) as a cofactor.

The enzyme catalyses 7-aminomethyl-7-carbaguanine + guanosine(34) in tRNA = 7-aminomethyl-7-carbaguanosine(34) in tRNA + guanine. The protein operates within tRNA modification; tRNA-queuosine biosynthesis. In terms of biological role, catalyzes the base-exchange of a guanine (G) residue with the queuine precursor 7-aminomethyl-7-deazaguanine (PreQ1) at position 34 (anticodon wobble position) in tRNAs with GU(N) anticodons (tRNA-Asp, -Asn, -His and -Tyr). Catalysis occurs through a double-displacement mechanism. The nucleophile active site attacks the C1' of nucleotide 34 to detach the guanine base from the RNA, forming a covalent enzyme-RNA intermediate. The proton acceptor active site deprotonates the incoming PreQ1, allowing a nucleophilic attack on the C1' of the ribose to form the product. After dissociation, two additional enzymatic reactions on the tRNA convert PreQ1 to queuine (Q), resulting in the hypermodified nucleoside queuosine (7-(((4,5-cis-dihydroxy-2-cyclopenten-1-yl)amino)methyl)-7-deazaguanosine). This Streptococcus pneumoniae (strain Taiwan19F-14) protein is Queuine tRNA-ribosyltransferase.